The sequence spans 260 residues: Small ribosomal subunit protein eS1 (260 aa).

The segment covering 1 to 18 (MAVGKNKRISKGKKGGKK) has biased composition (basic residues). Residues 1–22 (MAVGKNKRISKGKKGGKKKAAD) are disordered.

The protein belongs to the eukaryotic ribosomal protein eS1 family. In terms of assembly, component of the small ribosomal subunit. Mature ribosomes consist of a small (40S) and a large (60S) subunit. The 40S subunit contains about 33 different proteins and 1 molecule of RNA (18S). The 60S subunit contains about 49 different proteins and 3 molecules of RNA (25S, 5.8S and 5S).

It is found in the cytoplasm. This is Small ribosomal subunit protein eS1 from Helianthus annuus (Common sunflower).